A 245-amino-acid polypeptide reads, in one-letter code: Eukaryotic translation initiation factor 6 (245 aa).

The protein belongs to the eIF-6 family. Monomer. Associates with the 60S ribosomal subunit.

The protein localises to the cytoplasm. It is found in the nucleus. It localises to the nucleolus. Binds to the 60S ribosomal subunit and prevents its association with the 40S ribosomal subunit to form the 80S initiation complex in the cytoplasm. May also be involved in ribosome biogenesis. This Xenopus laevis (African clawed frog) protein is Eukaryotic translation initiation factor 6 (eif6).